The sequence spans 334 residues: CRISPR-associated protein Cas1 3 (334 aa).

Positions 165, 230, and 245 each coordinate Mn(2+).

This sequence belongs to the CRISPR-associated endonuclease Cas1 family. In terms of assembly, homodimer, forms a heterotetramer with a Cas2 homodimer. Mg(2+) is required as a cofactor. It depends on Mn(2+) as a cofactor.

In terms of biological role, CRISPR (clustered regularly interspaced short palindromic repeat), is an adaptive immune system that provides protection against mobile genetic elements (viruses, transposable elements and conjugative plasmids). CRISPR clusters contain spacers, sequences complementary to antecedent mobile elements, and target invading nucleic acids. CRISPR clusters are transcribed and processed into CRISPR RNA (crRNA). Acts as a dsDNA endonuclease. Involved in the integration of spacer DNA into the CRISPR cassette. This Methanobrevibacter ruminantium (strain ATCC 35063 / DSM 1093 / JCM 13430 / OCM 146 / M1) (Methanobacterium ruminantium) protein is CRISPR-associated protein Cas1 3.